Here is a 501-residue protein sequence, read N- to C-terminus: ATP synthase subunit alpha (501 aa).

169–176 (GDRQTGKT) contacts ATP.

This sequence belongs to the ATPase alpha/beta chains family. As to quaternary structure, F-type ATPases have 2 components, CF(1) - the catalytic core - and CF(0) - the membrane proton channel. CF(1) has five subunits: alpha(3), beta(3), gamma(1), delta(1), epsilon(1). CF(0) has three main subunits: a(1), b(2) and c(9-12). The alpha and beta chains form an alternating ring which encloses part of the gamma chain. CF(1) is attached to CF(0) by a central stalk formed by the gamma and epsilon chains, while a peripheral stalk is formed by the delta and b chains.

Its subcellular location is the cell membrane. The catalysed reaction is ATP + H2O + 4 H(+)(in) = ADP + phosphate + 5 H(+)(out). Functionally, produces ATP from ADP in the presence of a proton gradient across the membrane. The alpha chain is a regulatory subunit. This Streptococcus equi subsp. equi (strain 4047) protein is ATP synthase subunit alpha.